Here is a 165-residue protein sequence, read N- to C-terminus: Phosphopantetheine adenylyltransferase (165 aa).

Substrate is bound at residue Thr-10. ATP is bound by residues 10 to 11 and His-18; that span reads TF. 3 residues coordinate substrate: Lys-42, Leu-75, and Arg-89. Residues 90 to 92, Glu-100, and 125 to 131 contribute to the ATP site; these read GVR and VSFISSS.

It belongs to the bacterial CoaD family. Homohexamer. Requires Mg(2+) as cofactor.

It localises to the cytoplasm. The enzyme catalyses (R)-4'-phosphopantetheine + ATP + H(+) = 3'-dephospho-CoA + diphosphate. The protein operates within cofactor biosynthesis; coenzyme A biosynthesis; CoA from (R)-pantothenate: step 4/5. Reversibly transfers an adenylyl group from ATP to 4'-phosphopantetheine, yielding dephospho-CoA (dPCoA) and pyrophosphate. In Buchnera aphidicola subsp. Acyrthosiphon pisum (strain 5A), this protein is Phosphopantetheine adenylyltransferase.